Here is a 461-residue protein sequence, read N- to C-terminus: Armadillo repeat-containing X-linked protein 1 (461 aa).

Topologically, residues 1-6 are mitochondrial intermembrane; that stretch reads MGRTRE. 2 mitochondrion outer membrane (MOM)-targeting sequence regions span residues 1–6 and 26–36; these read MGRTRE and RLTWGKDENEK. Residues 7–29 traverse the membrane as a helical; Signal-anchor segment; it reads AGCVAAGMVIGAGACYCVYRLTW. Residues 30 to 461 lie on the Cytoplasmic side of the membrane; the sequence is GKDENEKLWD…VKVLKVLTKL (432 aa). Disordered regions lie at residues 34 to 110 and 148 to 192; these read NEKL…HSEG and SSLP…PATA. Acidic residues predominate over residues 38–51; that stretch reads WDDEDEEEEEEEES. The span at 96–110 shows a compositional bias: basic and acidic residues; the sequence is PDVKKEVYPESHSEG. Positions 167-185 are enriched in basic residues; the sequence is SRARNRTSGKVKRKNRSKS. 4 ARM repeats span residues 203-243, 245-284, 366-406, and 423-461; these read PYKI…NNAA, SFNQ…NLSV, PAMT…NIND, and SSLF…LTKL.

It belongs to the eutherian X-chromosome-specific Armcx family. Interacts with MIRO1.

The protein resides in the mitochondrion. Its subcellular location is the mitochondrion outer membrane. Regulates mitochondrial transport during axon regeneration. Increases the proportion of motile mitochondria by recruiting stationary mitochondria into the motile pool. Enhances mitochondria movement and neurite growth in both adult axons and embryonic neurons. Promotes neuronal survival and axon regeneration after nerve injury. May link mitochondria to the Trak1-kinesin motor complex via its interaction with MIRO1. This chain is Armadillo repeat-containing X-linked protein 1 (Armcx1), found in Rattus norvegicus (Rat).